Here is a 588-residue protein sequence, read N- to C-terminus: Oxidoreductase NdmD (588 aa).

Residues W9 to T114 enclose the Rieske domain. [2Fe-2S] cluster-binding residues include C50, H52, C69, and H72. The FAD-binding FR-type domain maps to P272–V373. The 86-residue stretch at Y503–L588 folds into the 2Fe-2S ferredoxin-type domain. Positions 537, 542, 545, and 575 each coordinate [2Fe-2S] cluster.

[2Fe-2S] cluster is required as a cofactor.

In terms of biological role, involved in the caffeine degradation, which is the essential first step for assimilating the carbon and nitrogen in caffeine. Catalyzes the oxidation of NADH and transfers electrons to NdmA and NdmB, which catalyze the N-demethylation reactions. The sequence is that of Oxidoreductase NdmD (ndmD) from Pseudomonas putida (Arthrobacter siderocapsulatus).